A 524-amino-acid chain; its full sequence is Histidine ammonia-lyase (524 aa).

A cross-link (5-imidazolinone (Ala-Gly)) is located at residues 139–141 (ASG). Serine 140 bears the 2,3-didehydroalanine (Ser) mark. The segment at 500–524 (ADTQAPAPAKLPDSGDEDRDTTSRH) is disordered.

The protein belongs to the PAL/histidase family. Post-translationally, contains an active site 4-methylidene-imidazol-5-one (MIO), which is formed autocatalytically by cyclization and dehydration of residues Ala-Ser-Gly.

It is found in the cytoplasm. It carries out the reaction L-histidine = trans-urocanate + NH4(+). Its pathway is amino-acid degradation; L-histidine degradation into L-glutamate; N-formimidoyl-L-glutamate from L-histidine: step 1/3. The protein is Histidine ammonia-lyase (hutH) of Deinococcus radiodurans (strain ATCC 13939 / DSM 20539 / JCM 16871 / CCUG 27074 / LMG 4051 / NBRC 15346 / NCIMB 9279 / VKM B-1422 / R1).